The sequence spans 175 residues: DDB1- and CUL4-associated factor 16 (175 aa).

Residues 1–42 form a disordered region; it reads MGPRNPSPDPLSESESEEEENTNYLNESSGEEWDSSEEEDPV. 2 stretches are compositionally biased toward acidic residues: residues 12–21 and 29–41; these read SESESEEEEN and SGEEWDSSEEEDP. Lys61 is subject to N6-acetyllysine.

Interacts with DDB1 and CUL4A.

It localises to the nucleus. It functions in the pathway protein modification; protein ubiquitination. In terms of biological role, functions as a substrate recognition component for CUL4-DDB1 E3 ubiquitin-protein ligase complex, which mediates ubiquitination and proteasome-dependent degradation of nuclear proteins. The sequence is that of DDB1- and CUL4-associated factor 16 (DCAF16) from Bos taurus (Bovine).